We begin with the raw amino-acid sequence, 340 residues long: Phenylalanine--tRNA ligase alpha subunit (340 aa).

Glu-255 is a Mg(2+) binding site.

The protein belongs to the class-II aminoacyl-tRNA synthetase family. Phe-tRNA synthetase alpha subunit type 1 subfamily. Tetramer of two alpha and two beta subunits. Requires Mg(2+) as cofactor.

Its subcellular location is the cytoplasm. It catalyses the reaction tRNA(Phe) + L-phenylalanine + ATP = L-phenylalanyl-tRNA(Phe) + AMP + diphosphate + H(+). The chain is Phenylalanine--tRNA ligase alpha subunit from Exiguobacterium sibiricum (strain DSM 17290 / CCUG 55495 / CIP 109462 / JCM 13490 / 255-15).